Here is a 451-residue protein sequence, read N- to C-terminus: Ribulose bisphosphate carboxylase large chain (451 aa).

Lysine 5 carries the post-translational modification N6,N6,N6-trimethyllysine. Positions 114 and 164 each coordinate substrate. Lysine 166 functions as the Proton acceptor in the catalytic mechanism. Lysine 168 contacts substrate. Mg(2+) is bound by residues lysine 192, aspartate 194, and glutamate 195. Lysine 192 carries the post-translational modification N6-carboxylysine. Histidine 285 (proton acceptor) is an active-site residue. 3 residues coordinate substrate: arginine 286, histidine 318, and serine 370.

Belongs to the RuBisCO large chain family. Type I subfamily. Heterohexadecamer of 8 large chains and 8 small chains; disulfide-linked. The disulfide link is formed within the large subunit homodimers. Requires Mg(2+) as cofactor. The disulfide bond which can form in the large chain dimeric partners within the hexadecamer appears to be associated with oxidative stress and protein turnover.

It localises to the plastid. It is found in the chloroplast. The catalysed reaction is 2 (2R)-3-phosphoglycerate + 2 H(+) = D-ribulose 1,5-bisphosphate + CO2 + H2O. The enzyme catalyses D-ribulose 1,5-bisphosphate + O2 = 2-phosphoglycolate + (2R)-3-phosphoglycerate + 2 H(+). In terms of biological role, ruBisCO catalyzes two reactions: the carboxylation of D-ribulose 1,5-bisphosphate, the primary event in carbon dioxide fixation, as well as the oxidative fragmentation of the pentose substrate in the photorespiration process. Both reactions occur simultaneously and in competition at the same active site. This is Ribulose bisphosphate carboxylase large chain from Aristea glauca.